The sequence spans 261 residues: Ribosomal RNA small subunit methyltransferase A (261 aa).

Positions 15, 17, 42, 64, 90, and 109 each coordinate S-adenosyl-L-methionine.

It belongs to the class I-like SAM-binding methyltransferase superfamily. rRNA adenine N(6)-methyltransferase family. RsmA subfamily.

Its subcellular location is the cytoplasm. It carries out the reaction adenosine(1518)/adenosine(1519) in 16S rRNA + 4 S-adenosyl-L-methionine = N(6)-dimethyladenosine(1518)/N(6)-dimethyladenosine(1519) in 16S rRNA + 4 S-adenosyl-L-homocysteine + 4 H(+). Its function is as follows. Specifically dimethylates two adjacent adenosines (A1518 and A1519) in the loop of a conserved hairpin near the 3'-end of 16S rRNA in the 30S particle. May play a critical role in biogenesis of 30S subunits. This is Ribosomal RNA small subunit methyltransferase A from Wolbachia sp. subsp. Brugia malayi (strain TRS).